Reading from the N-terminus, the 278-residue chain is MAIIKYKPTTNGRRNMTSSDFAEITKKKPEKTLLESQSHTAGRNSYGHITVRHRGGGHKQKYRIIDFKRNKDDVKAVVKAIEYDPNRTANIALLHYTDGIKAYILAPKGLKVGAVVESGPDADIKPGNALPLSAIPAGTEIHNIELKPGKGGQLVRSAGTVAQVLGNDGKYTLVRLQSGEVRKILSTCRATIGSVGNEQHSLIQLGKAGRSRWLGKRPQSRGSVMNPNDHPHGGGEGKAPVGRPQPMTPWGKKSRGIKTRNSKARSEKLIIRHRKGNK.

Composition is skewed to basic residues over residues 210 to 219 (RSRWLGKRPQ) and 252 to 263 (KKSRGIKTRNSK). Positions 210–278 (RSRWLGKRPQ…LIIRHRKGNK (69 aa)) are disordered.

Belongs to the universal ribosomal protein uL2 family. Part of the 50S ribosomal subunit. Forms a bridge to the 30S subunit in the 70S ribosome.

In terms of biological role, one of the primary rRNA binding proteins. Required for association of the 30S and 50S subunits to form the 70S ribosome, for tRNA binding and peptide bond formation. It has been suggested to have peptidyltransferase activity; this is somewhat controversial. Makes several contacts with the 16S rRNA in the 70S ribosome. In Lactobacillus johnsonii (strain CNCM I-12250 / La1 / NCC 533), this protein is Large ribosomal subunit protein uL2.